Consider the following 90-residue polypeptide: Probable Fe(2+)-trafficking protein (90 aa).

It belongs to the Fe(2+)-trafficking protein family.

In terms of biological role, could be a mediator in iron transactions between iron acquisition and iron-requiring processes, such as synthesis and/or repair of Fe-S clusters in biosynthetic enzymes. This is Probable Fe(2+)-trafficking protein from Albidiferax ferrireducens (strain ATCC BAA-621 / DSM 15236 / T118) (Rhodoferax ferrireducens).